We begin with the raw amino-acid sequence, 72 residues long: Prokaryotic ubiquitin-like protein Pup (72 aa).

The segment covering 1 to 10 (MATRDSGGGQ) has biased composition (gly residues). The segment at 1-41 (MATRDSGGGQQRADRRAEEIDDVATEDTSASDLKERHEKLS) is disordered. Residues 27–61 (DTSASDLKERHEKLSEDVDSLLDEIDDVLEENAEE) are a coiled coil. Residues 28–66 (TSASDLKERHEKLSEDVDSLLDEIDDVLEENAEEFVKGY) form an ARC ATPase binding region. Residues 32-41 (DLKERHEKLS) show a composition bias toward basic and acidic residues. The residue at position 72 (Gln72) is a Deamidated glutamine. Gln72 is covalently cross-linked (Isoglutamyl lysine isopeptide (Gln-Lys) (interchain with K-? in acceptor proteins)).

This sequence belongs to the prokaryotic ubiquitin-like protein family. As to quaternary structure, strongly interacts with the proteasome-associated ATPase ARC through a hydrophobic interface; the interacting region of Pup lies in its C-terminal half. There is one Pup binding site per ARC hexamer ring. Is modified by deamidation of its C-terminal glutamine to glutamate by the deamidase Dop, a prerequisite to the subsequent pupylation process.

Its pathway is protein degradation; proteasomal Pup-dependent pathway. In terms of biological role, protein modifier that is covalently attached to lysine residues of substrate proteins, thereby targeting them for proteasomal degradation. The tagging system is termed pupylation. The protein is Prokaryotic ubiquitin-like protein Pup of Frankia casuarinae (strain DSM 45818 / CECT 9043 / HFP020203 / CcI3).